The following is a 260-amino-acid chain: Triosephosphate isomerase (260 aa).

Residue 11–13 (NWK) coordinates substrate. His103 serves as the catalytic Electrophile. Residue Glu175 is the Proton acceptor of the active site. Residues Gly181, Ser220, and 241-242 (GG) contribute to the substrate site.

The protein belongs to the triosephosphate isomerase family. Homodimer.

The protein localises to the cytoplasm. It catalyses the reaction D-glyceraldehyde 3-phosphate = dihydroxyacetone phosphate. Its pathway is carbohydrate biosynthesis; gluconeogenesis. It participates in carbohydrate degradation; glycolysis; D-glyceraldehyde 3-phosphate from glycerone phosphate: step 1/1. Involved in the gluconeogenesis. Catalyzes stereospecifically the conversion of dihydroxyacetone phosphate (DHAP) to D-glyceraldehyde-3-phosphate (G3P). The protein is Triosephosphate isomerase of Shewanella woodyi (strain ATCC 51908 / MS32).